Reading from the N-terminus, the 686-residue chain is Homoaconitase, mitochondrial (686 aa).

The transit peptide at 1 to 17 directs the protein to the mitochondrion; it reads MRVVRCVRRFSASRAVS. Cysteine 337, cysteine 401, and cysteine 404 together coordinate [4Fe-4S] cluster.

This sequence belongs to the aconitase/IPM isomerase family. The cofactor is [4Fe-4S] cluster.

Its subcellular location is the mitochondrion. The enzyme catalyses (2R,3S)-homoisocitrate = cis-homoaconitate + H2O. It functions in the pathway amino-acid biosynthesis; L-lysine biosynthesis via AAA pathway; L-alpha-aminoadipate from 2-oxoglutarate: step 3/5. Functionally, catalyzes the reversible hydration of cis-homoaconitate to (2R,3S)-homoisocitrate, a step in the alpha-aminoadipate pathway for lysine biosynthesis. The polypeptide is Homoaconitase, mitochondrial (LYS4) (Eremothecium gossypii (strain ATCC 10895 / CBS 109.51 / FGSC 9923 / NRRL Y-1056) (Yeast)).